Here is a 181-residue protein sequence, read N- to C-terminus: Trans-acting factor D (181 aa).

Its function is as follows. Plays a role in 2-micron plasmid partitioning. Antagonizes transcriptional repression of recombinase FLP by REP1-REP2. Regulates both stability and copy number of the plasmid by blocking the formation of the REP1-REP2 repressor complex. The sequence is that of Trans-acting factor D from Saccharomyces cerevisiae (strain ATCC 204508 / S288c) (Baker's yeast).